We begin with the raw amino-acid sequence, 454 residues long: Cobyrinate a,c-diamide synthase (454 aa).

One can recognise a GATase cobBQ-type domain in the interval 244 to 435 (KIAVAYDSAF…VHIHFLSNIA (192 aa)). Cysteine 327 functions as the Nucleophile in the catalytic mechanism.

This sequence belongs to the CobB/CbiA family. It depends on Mg(2+) as a cofactor.

The enzyme catalyses cob(II)yrinate + 2 L-glutamine + 2 ATP + 2 H2O = cob(II)yrinate a,c diamide + 2 L-glutamate + 2 ADP + 2 phosphate + 2 H(+). It participates in cofactor biosynthesis; adenosylcobalamin biosynthesis; cob(II)yrinate a,c-diamide from sirohydrochlorin (anaerobic route): step 10/10. Functionally, catalyzes the ATP-dependent amidation of the two carboxylate groups at positions a and c of cobyrinate, using either L-glutamine or ammonia as the nitrogen source. The sequence is that of Cobyrinate a,c-diamide synthase from Thermoplasma volcanium (strain ATCC 51530 / DSM 4299 / JCM 9571 / NBRC 15438 / GSS1).